Here is a 480-residue protein sequence, read N- to C-terminus: MRRSDRFPCAGASLLVVLCGVFPSSFGGRTLPGLSDDIPFRLKWPGPDFTLPTAGIPYKEENYIIMTTADQETYKCMLPLMANGNEEEDREYKGPSPGELLDPLFKLSSCSYRIESYWTYEVCHGKYIRQYHEEKEAGQKLNIQEYYLGKTVKKSPSEAGENQEDKERTEGHKDIHTKNIEGQMTPYYPVEMTNGTPCSLKQNQARSSTVMYICHPEAKHEILSVAEITTCEYEVVILTPLLCNHPKYKFRPSPINDIFCQSMPGSPLRPQSLEKLEHQQEEIKSPLKAKEEEQQLLKEKFSTIHKPVTVGSQQQVTVGTTHISRLTDEQLIKEFLSGSYCFHGGVGWWKYEFCYGKYVHQYHEDKDTGKTTVVVGTWKAEEHLDWAKKNLAKAYMSTADGVQTVKTVSHFYGGGDLCEVNEQPRQVVVKLKCKQSESPHAVTVYMLEPQTCQYILGVESPVICKILDTADENGLLSIPN.

Positions 1-27 (MRRSDRFPCAGASLLVVLCGVFPSSFG) are cleaved as a signal peptide. 2 MRH domains span residues 108–245 (SSCS…LCNH) and 339–466 (SYCF…ICKI). Cys-110 and Cys-123 form a disulfide bridge. The tract at residues 152–172 (VKKSPSEAGENQEDKERTEGH) is disordered. Residues 163–172 (QEDKERTEGH) are compositionally biased toward basic and acidic residues. Cystine bridges form between Cys-198–Cys-231, Cys-214–Cys-243, Cys-341–Cys-354, Cys-418–Cys-452, and Cys-433–Cys-464.

It is found in the endoplasmic reticulum lumen. Probable lectin that binds selectively to improperly folded lumenal proteins. May function in endoplasmic reticulum quality control and endoplasmic reticulum-associated degradation (ERAD) of both non-glycosylated proteins and glycoproteins. The chain is Endoplasmic reticulum lectin 1 (erlec1) from Xenopus laevis (African clawed frog).